Here is a 227-residue protein sequence, read N- to C-terminus: Ribosomal RNA small subunit methyltransferase G (227 aa).

S-adenosyl-L-methionine-binding positions include G74, L79, 124 to 125, and R142; that span reads AE.

Belongs to the methyltransferase superfamily. RNA methyltransferase RsmG family.

It is found in the cytoplasm. In terms of biological role, specifically methylates the N7 position of guanine in position 518 of 16S rRNA. The chain is Ribosomal RNA small subunit methyltransferase G from Mycolicibacterium vanbaalenii (strain DSM 7251 / JCM 13017 / BCRC 16820 / KCTC 9966 / NRRL B-24157 / PYR-1) (Mycobacterium vanbaalenii).